The primary structure comprises 317 residues: N(5)-(carboxyethyl)ornithine synthase (317 aa).

3 residues coordinate pyruvate: arginine 15, lysine 71, and histidine 92. NADP(+) is bound at residue 172 to 177 (GSGNVS).

It belongs to the AlaDH/PNT family. CEOS subfamily. As to quaternary structure, homotetramer.

It carries out the reaction N(5)-[1(S)-1-carboxyethyl]-L-ornithine + NADP(+) + H2O = L-ornithine + pyruvate + NADPH + H(+). Functionally, catalyzes the NADPH-dependent reductive condensation between pyruvic acid and the side chain amino group of L-ornithine to form N(5)-(L-1-carboxyethyl)-L-ornithine. To a lesser extent, can also use L-lysine as substrate (yielding N(6)-(L-1-carboxyethyl)-L-lysine), and the D-isomers of the 2 basic amino acids. Can use alpha-keto acids other than pyruvate, e.g. glyoxylate. This chain is N(5)-(carboxyethyl)ornithine synthase (ceo), found in Clostridium botulinum (strain Hall / ATCC 3502 / NCTC 13319 / Type A).